A 187-amino-acid polypeptide reads, in one-letter code: UPF0200 protein MM_1313 (187 aa).

Position 9–16 (9–16 (GMPASGKS)) interacts with ATP.

This sequence belongs to the UPF0200 family.

This Methanosarcina mazei (strain ATCC BAA-159 / DSM 3647 / Goe1 / Go1 / JCM 11833 / OCM 88) (Methanosarcina frisia) protein is UPF0200 protein MM_1313.